Reading from the N-terminus, the 147-residue chain is UPF0306 protein YhbP (147 aa).

It belongs to the UPF0306 family.

This chain is UPF0306 protein YhbP, found in Shigella sonnei (strain Ss046).